The chain runs to 342 residues: tRNA N6-adenosine threonylcarbamoyltransferase (342 aa).

Residues H112 and H116 each coordinate Fe cation. Substrate is bound by residues 134–138 (LASGG), D167, G180, and N280. D308 provides a ligand contact to Fe cation.

Belongs to the KAE1 / TsaD family. It depends on Fe(2+) as a cofactor.

The protein localises to the cytoplasm. It carries out the reaction L-threonylcarbamoyladenylate + adenosine(37) in tRNA = N(6)-L-threonylcarbamoyladenosine(37) in tRNA + AMP + H(+). In terms of biological role, required for the formation of a threonylcarbamoyl group on adenosine at position 37 (t(6)A37) in tRNAs that read codons beginning with adenine. Is involved in the transfer of the threonylcarbamoyl moiety of threonylcarbamoyl-AMP (TC-AMP) to the N6 group of A37, together with TsaE and TsaB. TsaD likely plays a direct catalytic role in this reaction. This Rickettsia canadensis (strain McKiel) protein is tRNA N6-adenosine threonylcarbamoyltransferase.